Consider the following 181-residue polypeptide: Trafficking protein particle complex subunit 3 homolog (181 aa).

A lipid anchor (S-palmitoyl cysteine) is attached at Cys70.

It belongs to the TRAPP small subunits family. BET3 subfamily. As to quaternary structure, homodimer. Part of the multisubunit TRAPP (transport protein particle) complex.

It localises to the golgi apparatus. The protein localises to the cis-Golgi network. The protein resides in the endoplasmic reticulum. Functionally, may play a role in vesicular transport from endoplasmic reticulum to Golgi. Required for the systemic spread of the RNAi response. The sequence is that of Trafficking protein particle complex subunit 3 homolog from Caenorhabditis briggsae.